Here is a 587-residue protein sequence, read N- to C-terminus: ATP-dependent zinc metalloprotease FtsH 2 (587 aa).

Residues Met-1 to Arg-12 are Cytoplasmic-facing. Residues Ile-13–Thr-33 traverse the membrane as a helical segment. Residues Arg-34 to Pro-102 lie on the Extracellular side of the membrane. A helical membrane pass occupies residues Trp-103–Trp-123. Residues Ala-124–Ala-587 lie on the Cytoplasmic side of the membrane. Residue Gly-192–Thr-199 participates in ATP binding. Residue His-416 participates in Zn(2+) binding. Glu-417 is an active-site residue. Zn(2+)-binding residues include His-420 and Asp-492.

The protein in the central section; belongs to the AAA ATPase family. This sequence in the C-terminal section; belongs to the peptidase M41 family. In terms of assembly, homohexamer. It depends on Zn(2+) as a cofactor.

Its subcellular location is the cell membrane. Acts as a processive, ATP-dependent zinc metallopeptidase for both cytoplasmic and membrane proteins. Plays a role in the quality control of integral membrane proteins. This Symbiobacterium thermophilum (strain DSM 24528 / JCM 14929 / IAM 14863 / T) protein is ATP-dependent zinc metalloprotease FtsH 2.